A 160-amino-acid polypeptide reads, in one-letter code: Thioredoxin-like protein 4A homolog (160 aa).

The interval 132–160 (KFLKKKKKKKNKKKQKKKIKKIKKKIKNN) is disordered. Positions 133-160 (FLKKKKKKKNKKKQKKKIKKIKKKIKNN) are enriched in basic residues.

Belongs to the DIM1 family. Component of the precatalytic spliceosome (spliceosome B complex). Component of the U5 snRNP complex. Component of the U4/U6-U5 tri-snRNP complex.

It localises to the nucleus. Plays a role in pre-mRNA splicing as component of the U5 snRNP and U4/U6-U5 tri-snRNP complexes that are involved in spliceosome assembly, and as component of the precatalytic spliceosome (spliceosome B complex). This chain is Thioredoxin-like protein 4A homolog (txnl4a), found in Dictyostelium discoideum (Social amoeba).